Consider the following 89-residue polypeptide: Small ribosomal subunit protein uS15 (89 aa).

It belongs to the universal ribosomal protein uS15 family. In terms of assembly, part of the 30S ribosomal subunit. Forms a bridge to the 50S subunit in the 70S ribosome, contacting the 23S rRNA.

Functionally, one of the primary rRNA binding proteins, it binds directly to 16S rRNA where it helps nucleate assembly of the platform of the 30S subunit by binding and bridging several RNA helices of the 16S rRNA. In terms of biological role, forms an intersubunit bridge (bridge B4) with the 23S rRNA of the 50S subunit in the ribosome. The protein is Small ribosomal subunit protein uS15 of Renibacterium salmoninarum (strain ATCC 33209 / DSM 20767 / JCM 11484 / NBRC 15589 / NCIMB 2235).